A 213-amino-acid polypeptide reads, in one-letter code: Phosphoenolpyruvate guanylyltransferase (213 aa).

Residues Thr-146, Gly-161, and Ser-164 each contribute to the phosphoenolpyruvate site.

It belongs to the CofC family.

It catalyses the reaction phosphoenolpyruvate + GTP + H(+) = enolpyruvoyl-2-diphospho-5'-guanosine + diphosphate. The protein operates within cofactor biosynthesis; coenzyme F420 biosynthesis. Guanylyltransferase that catalyzes the activation of phosphoenolpyruvate (PEP) as enolpyruvoyl-2-diphospho-5'-guanosine, via the condensation of PEP with GTP. It is involved in the biosynthesis of coenzyme F420, a hydride carrier cofactor. In Mycolicibacterium vanbaalenii (strain DSM 7251 / JCM 13017 / BCRC 16820 / KCTC 9966 / NRRL B-24157 / PYR-1) (Mycobacterium vanbaalenii), this protein is Phosphoenolpyruvate guanylyltransferase.